A 1162-amino-acid chain; its full sequence is Spike glycoprotein (1162 aa).

Residues M1–A18 form the signal peptide. Residues V19–Y1095 lie on the Extracellular side of the membrane. 21 N-linked (GlcNAc...) asparagine; by host glycosylation sites follow: N51, N77, N103, N144, N163, N178, N212, N237, N247, N264, N276, N306, N425, N447, N513, N530, N579, N591, N669, N676, and N714. Residues I769 to L874 are heptad repeat 1 (HR1). Residues Q822–V866 adopt a coiled-coil conformation. N947, N960, N979, N1014, N1038, N1051, and N1074 each carry an N-linked (GlcNAc...) asparagine; by host glycan. Residues N1024–I1105 form a heptad repeat 2 (HR2) region. The stretch at P1055–L1083 forms a coiled coil. Residues V1096 to F1116 traverse the membrane as a helical segment. The Cytoplasmic portion of the chain corresponds to M1117–V1162. A Di-lysine motif motif is present at residues K1159–V1162.

The protein belongs to the gammacoronaviruses spike protein family. Homotrimer; each monomer consists of a S1 and a S2 subunit. The resulting peplomers protrude from the virus surface as spikes. In terms of processing, specific enzymatic cleavages in vivo yield mature proteins. The precursor is processed into S1 and S2 by host cell furin or furin-like protease to yield the mature S1 and S2 proteins. The cleavage site between S1 and S2 requires the optimal sequence [KR]-X-[KR]-R. Additionally, a second cleavage leads to the release of a fusion peptide after viral attachment to host cell receptor.

It localises to the virion membrane. It is found in the host endoplasmic reticulum-Golgi intermediate compartment membrane. Its function is as follows. Attaches the virion to the host cell membrane by interacting with sialic acids, initiating the infection. In terms of biological role, mediates fusion of the virion and cellular membranes by acting as a class I viral fusion protein. Under the current model, the protein has at least 3 conformational states: pre-fusion native state, pre-hairpin intermediate state, and post-fusion hairpin state. During viral and target cell membrane fusion, the coiled coil regions (heptad repeats) assume a trimer-of-hairpins structure, positioning the fusion peptide in close proximity to the C-terminal region of the ectodomain. The formation of this structure appears to drive apposition and subsequent fusion of viral and target cell membranes. Functionally, acts as a viral fusion peptide after S2 cleavage occurring upon virus endocytosis. The polypeptide is Spike glycoprotein (Avian infectious bronchitis virus (strain Beaudette) (IBV)).